Reading from the N-terminus, the 1515-residue chain is Adhesion G protein-coupled receptor L1 (1515 aa).

An N-terminal signal peptide occupies residues 1-24 (MARLAAALWSLCVTTVLVTSATQG). At 25-857 (LSRAGLPFGL…EIYQGRINEL (833 aa)) the chain is on the extracellular side. One can recognise an SUEL-type lectin domain in the interval 40–129 (ACEGYPIELR…KYLEVQYDCV (90 aa)). Intrachain disulfides connect C41–C71, C50–C128, C83–C115, C96–C102, and C140–C322. An alpha-L-rhamnose-binding site is contributed by E42. N-linked (GlcNAc...) asparagine glycosylation occurs at N98. 117 to 120 (GTYK) contacts alpha-L-rhamnose. Residues 139-398 (VCPGTLQKVL…VVRYSLEFGP (260 aa)) form the Olfactomedin-like domain. Residues 400–468 (DPSAGPATSP…APAPSTRRPP (69 aa)) are disordered. The segment covering 405–441 (PATSPPLSTTTTARPTPLTSTASPAATTPLRRAPLTT) has biased composition (low complexity). Positions 453–468 (DLPPATAPAPSTRRPP) are enriched in pro residues. 2 cysteine pairs are disulfide-bonded: C480-C515 and C503-C532. 6 N-linked (GlcNAc...) asparagine glycosylation sites follow: N531, N640, N741, N800, N805, and N826. Residues 669-850 (PARFLAAKQN…AVLMAHREIY (182 aa)) enclose the GAIN-B domain. 2 disulfide bridges follow: C801–C832 and C820–C834. The interval 801–850 (CSFWNYSERSMLGYWSTQGCRLVESNKTHTTCACSHLTNFAVLMAHREIY) is GPS. Residues 858–878 (LLSVITWVGIVISLVCLAICI) traverse the membrane as a helical segment. Topologically, residues 879–892 (STFCFLRGLQTDRN) are cytoplasmic. The chain crosses the membrane as a helical span at residues 893 to 913 (TIHKNLCINLFLAELLFLVGI). Topologically, residues 914-919 (DKTQYE) are extracellular. The helical transmembrane segment at 920 to 940 (VACPIFAGLLHYFFLAAFSWL) threads the bilayer. At 941–964 (CLEGVHLYLLLVEVFESEYSRTKY) the chain is on the cytoplasmic side. Residues 965–985 (YYLGGYCFPALVVGIAAAIDY) traverse the membrane as a helical segment. At 986–1001 (RSYGTEKACWLRVDNY) the chain is on the extracellular side. A helical transmembrane segment spans residues 1002 to 1022 (FIWSFIGPVSFVIVVNLVFLM). The Cytoplasmic segment spans residues 1023-1049 (VTLHKMIRSSSVLKPDSSRLDNIKSWA). The chain crosses the membrane as a helical span at residues 1050 to 1070 (LGAIALLFLLGLTWAFGLLFI). Residues 1071 to 1074 (NKES) are Extracellular-facing. Residues 1075-1095 (VVMAYLFTTFNAFQGVFIFVF) form a helical membrane-spanning segment. At 1096–1515 (HCALQKKVHK…DGQMQLVTSL (420 aa)) the chain is on the cytoplasmic side. Positions 1144–1184 (TQVPGQGRHIHQVSLGPRGRSALPESQKDPGGQSGPGDPLT) are disordered. At R1237 the chain carries Omega-N-methylarginine. S1263 bears the Phosphoserine mark. Disordered stretches follow at residues 1291–1316 (FNNS…RGRN), 1337–1369 (RGAS…PGGA), 1401–1470 (ESES…SRPP), and 1492–1515 (YLAA…VTSL). Composition is skewed to pro residues over residues 1345 to 1356 (GPPPEPPVPPVP) and 1449 to 1461 (ALPP…PGPP). Phosphoserine is present on residues S1497 and S1514.

The protein belongs to the G-protein coupled receptor 2 family. Adhesion G-protein coupled receptor (ADGR) subfamily. As to quaternary structure, forms a heterodimer, consisting of a large extracellular region (p120) non-covalently linked to a seven-transmembrane moiety (p85). Interacts with syntaxin and with proteins of the SHANK family via the PDZ domain. Isoform 2 interacts with TENM2. Interacts (via extracellular domain) with FLRT1, FLRT2 and FLRT3 (via extracellular domain). In terms of processing, autoproteolytically cleaved into 2 subunits, an extracellular subunit and a seven-transmembrane subunit. This proteolytic processing takes place early in the biosynthetic pathway, either in the endoplasmic reticulum or in the early compartment of the Golgi apparatus. In terms of tissue distribution, expressed in the brain (at protein level). Brain specific distribution but low levels are also detected in most tissues.

It is found in the cell membrane. Its subcellular location is the cell projection. The protein localises to the axon. The protein resides in the growth cone. It localises to the synapse. It is found in the presynaptic cell membrane. Its subcellular location is the synaptosome. Its function is as follows. Calcium-independent receptor of high affinity for alpha-latrotoxin, an excitatory neurotoxin present in black widow spider venom which triggers massive exocytosis from neurons and neuroendocrine cells. Receptor probably implicated in the regulation of exocytosis. Receptor for TENM2 that mediates heterophilic synaptic cell-cell contact and postsynaptic specialization. The protein is Adhesion G protein-coupled receptor L1 of Rattus norvegicus (Rat).